The chain runs to 346 residues: G-protein coupled receptor homolog U12 (346 aa).

Residues 1-31 (MICYSFAKNVTFAFLIILQNFFSQHDEEYKY) are Extracellular-facing. A helical transmembrane segment spans residues 32 to 56 (NYTCITPTVRKAQRLESVINGIMLT). The Cytoplasmic segment spans residues 57-83 (LILPVSTVVICTLLIYYKWTKQTITSP). Residues 84 to 108 (YLITLFISDSLHSLTVLLLTLNREA) traverse the membrane as a helical segment. The Extracellular segment spans residues 109 to 115 (LTNLNQA). A helical membrane pass occupies residues 116–142 (LCQCVLFVYSASCTYSLCMLAVISTIR). Residues 143–159 (YRTLQRRTLNDKNNNHI) lie on the Cytoplasmic side of the membrane. A helical membrane pass occupies residues 160–181 (KRNVGILFLSSAMCAIPAVLYV). At 182–208 (QVEKKKGNYGKCNIHISTQKAYDLFIG) the chain is on the extracellular side. A helical transmembrane segment spans residues 209–229 (IKIVYCFLWGIFPTVIFSYFY). Residues 230–245 (VIFGKTLRALTQSKHN) are Cytoplasmic-facing. Residues 246–272 (KTLSFISLLILSFLCIQIPNLLVMSVE) traverse the membrane as a helical segment. Residues 273-286 (IFFLYIANTSCLGT) lie on the Extracellular side of the membrane. The helical transmembrane segment at 287 to 310 (IQREIVQIISRLMPEIHCLSNPLV) threads the bilayer. At 311–346 (YAFTRTDFRLRFYDFIKCNLCNSSLKRKRNPLTIKN) the chain is on the cytoplasmic side.

It belongs to the G-protein coupled receptor 1 family.

The protein resides in the host cell membrane. This Homo sapiens (Human) protein is G-protein coupled receptor homolog U12 (U12).